A 324-amino-acid chain; its full sequence is uncharacterized protein (324 aa).

Residues 6 to 63 (LKYRELKIISVIAASENISHAATVLGIAQANVSKYLADFESKVGLKVFDRTTRQLMLT) enclose the HTH lysR-type domain. The segment at residues 23-42 (ISHAATVLGIAQANVSKYLA) is a DNA-binding region (H-T-H motif).

Belongs to the LysR transcriptional regulatory family.

This is an uncharacterized protein from Escherichia coli (strain K12).